The sequence spans 426 residues: Putative nickel insertion protein (426 aa).

This sequence belongs to the LarC family.

The protein is Putative nickel insertion protein of Nostoc sp. (strain PCC 7120 / SAG 25.82 / UTEX 2576).